Reading from the N-terminus, the 116-residue chain is C-C motif chemokine 6 (116 aa).

Residues 1-21 form the signal peptide; that stretch reads MRNSKTAISFFILVAVLGSQA. Cystine bridges form between C50–C73, C51–C89, and C60–C100.

The protein belongs to the intercrine beta (chemokine CC) family. The N-terminal is proteolytically cleaved by proteases associated with inflammatory responses. The processed forms CL6(22-95) and CCL6(23-95) show increase in CCR1-mediated signaling and chemotaxis assays in vitro. As to expression, expressed in myelopoietic bone marrow cultures stimulated by GM-CSF.

The protein localises to the secreted. Chemotactic factor that attracts mostly macrophage, but it can also attract B cells, CD4(+) lymphocytes and eosinophils. This is C-C motif chemokine 6 (Ccl6) from Mus musculus (Mouse).